Reading from the N-terminus, the 412-residue chain is Tyrosine--tRNA ligase 1 (412 aa).

Position 41 (Y41) interacts with L-tyrosine. The 'HIGH' region signature appears at 46 to 55 (ATADSLHVGH). L-tyrosine-binding residues include Y174 and Q178. A 'KMSKS' region motif is present at residues 234-238 (KMGKS). Residue K237 coordinates ATP. The S4 RNA-binding domain occupies 348 to 411 (LSLTDLLLEH…KKQHLHLRLE (64 aa)).

It belongs to the class-I aminoacyl-tRNA synthetase family. TyrS type 1 subfamily. As to quaternary structure, homodimer.

The protein resides in the cytoplasm. The catalysed reaction is tRNA(Tyr) + L-tyrosine + ATP = L-tyrosyl-tRNA(Tyr) + AMP + diphosphate + H(+). Its function is as follows. Catalyzes the attachment of tyrosine to tRNA(Tyr) in a two-step reaction: tyrosine is first activated by ATP to form Tyr-AMP and then transferred to the acceptor end of tRNA(Tyr). This chain is Tyrosine--tRNA ligase 1, found in Pseudomonas aeruginosa (strain ATCC 15692 / DSM 22644 / CIP 104116 / JCM 14847 / LMG 12228 / 1C / PRS 101 / PAO1).